Reading from the N-terminus, the 374-residue chain is WAT1-related protein At2g39510 (374 aa).

The next 10 helical transmembrane spans lie at 9-29 (FITV…AKFA), 38-58 (VLAS…AYFL), 64-84 (PKMT…EPTI), 99-119 (TFTA…AWIF), 135-155 (ILGT…KGPL), 182-202 (GASL…LQAI), 212-232 (SLTA…ALFI), 249-269 (LAAV…QGVI), 284-304 (LSMV…MFLG), and 306-326 (ILGA…KSKD). 2 consecutive EamA domains span residues 19-147 (YAGL…GAML) and 191-320 (ICWA…YSVL). Residues 350-374 (SKANAKMDTNDASVVISRPNTNESV) form a disordered region.

It belongs to the drug/metabolite transporter (DMT) superfamily. Plant drug/metabolite exporter (P-DME) (TC 2.A.7.4) family.

It is found in the membrane. In Arabidopsis thaliana (Mouse-ear cress), this protein is WAT1-related protein At2g39510.